Here is a 557-residue protein sequence, read N- to C-terminus: Ribonuclease J 2 (557 aa).

4 residues coordinate Zn(2+): histidine 76, histidine 78, histidine 144, and glutamate 166. 366-370 (HASSH) is a substrate binding site.

It belongs to the metallo-beta-lactamase superfamily. RNA-metabolizing metallo-beta-lactamase-like family. Bacterial RNase J subfamily. In terms of assembly, homodimer, may be a subunit of the RNA degradosome. Zn(2+) serves as cofactor.

It is found in the cytoplasm. Functionally, an RNase that has 5'-3' exonuclease and possibly endoonuclease activity. Involved in maturation of rRNA and in some organisms also mRNA maturation and/or decay. The protein is Ribonuclease J 2 of Staphylococcus saprophyticus subsp. saprophyticus (strain ATCC 15305 / DSM 20229 / NCIMB 8711 / NCTC 7292 / S-41).